We begin with the raw amino-acid sequence, 227 residues long: UPF0758 protein Dhaf_4352 (227 aa).

Positions 105 to 227 (VINSPQDIAH…YISLKERGIL (123 aa)) constitute an MPN domain. Zn(2+)-binding residues include His-176, His-178, and Asp-189. Residues 176 to 189 (HNHPSGDPTPSSED) carry the JAMM motif motif.

The protein belongs to the UPF0758 family.

The chain is UPF0758 protein Dhaf_4352 from Desulfitobacterium hafniense (strain DSM 10664 / DCB-2).